The sequence spans 184 residues: Protein GrpE (184 aa).

The tract at residues 1-32 is disordered; the sequence is MEEQKQTPSTPTPDTAAEAAVNAATAAPETAG. Low complexity predominate over residues 12–32; sequence TPDTAAEAAVNAATAAPETAG.

The protein belongs to the GrpE family. In terms of assembly, homodimer.

The protein localises to the cytoplasm. Functionally, participates actively in the response to hyperosmotic and heat shock by preventing the aggregation of stress-denatured proteins, in association with DnaK and GrpE. It is the nucleotide exchange factor for DnaK and may function as a thermosensor. Unfolded proteins bind initially to DnaJ; upon interaction with the DnaJ-bound protein, DnaK hydrolyzes its bound ATP, resulting in the formation of a stable complex. GrpE releases ADP from DnaK; ATP binding to DnaK triggers the release of the substrate protein, thus completing the reaction cycle. Several rounds of ATP-dependent interactions between DnaJ, DnaK and GrpE are required for fully efficient folding. This Cupriavidus pinatubonensis (strain JMP 134 / LMG 1197) (Cupriavidus necator (strain JMP 134)) protein is Protein GrpE.